The sequence spans 139 residues: ATP synthase epsilon chain (139 aa).

This sequence belongs to the ATPase epsilon chain family. As to quaternary structure, F-type ATPases have 2 components, CF(1) - the catalytic core - and CF(0) - the membrane proton channel. CF(1) has five subunits: alpha(3), beta(3), gamma(1), delta(1), epsilon(1). CF(0) has three main subunits: a, b and c.

It localises to the cell inner membrane. In terms of biological role, produces ATP from ADP in the presence of a proton gradient across the membrane. The chain is ATP synthase epsilon chain from Serratia proteamaculans (strain 568).